The primary structure comprises 70 residues: uncharacterized protein (70 aa).

It localises to the plastid. This is an uncharacterized protein from Euglena longa (Euglenophycean alga).